The following is a 72-amino-acid chain: SRY-related protein AES6 (72 aa).

Positions 1–69 form a DNA-binding region, HMG box; it reads VKRPMNAFMV…KHMADYPDYK (69 aa).

The protein resides in the nucleus. This Alligator mississippiensis (American alligator) protein is SRY-related protein AES6.